The sequence spans 468 residues: UDP-N-acetylmuramoylalanine--D-glutamate ligase (468 aa).

An ATP-binding site is contributed by 127–133 (GTNGKTT).

This sequence belongs to the MurCDEF family.

It is found in the cytoplasm. It catalyses the reaction UDP-N-acetyl-alpha-D-muramoyl-L-alanine + D-glutamate + ATP = UDP-N-acetyl-alpha-D-muramoyl-L-alanyl-D-glutamate + ADP + phosphate + H(+). Its pathway is cell wall biogenesis; peptidoglycan biosynthesis. Cell wall formation. Catalyzes the addition of glutamate to the nucleotide precursor UDP-N-acetylmuramoyl-L-alanine (UMA). This Prochlorococcus marinus (strain MIT 9312) protein is UDP-N-acetylmuramoylalanine--D-glutamate ligase.